The following is a 293-amino-acid chain: 4-hydroxy-tetrahydrodipicolinate synthase (293 aa).

Threonine 45 lines the pyruvate pocket. Residue tyrosine 133 is the Proton donor/acceptor of the active site. The active-site Schiff-base intermediate with substrate is lysine 161. Pyruvate is bound at residue isoleucine 203.

The protein belongs to the DapA family. Homotetramer; dimer of dimers.

It is found in the cytoplasm. The catalysed reaction is L-aspartate 4-semialdehyde + pyruvate = (2S,4S)-4-hydroxy-2,3,4,5-tetrahydrodipicolinate + H2O + H(+). It functions in the pathway amino-acid biosynthesis; L-lysine biosynthesis via DAP pathway; (S)-tetrahydrodipicolinate from L-aspartate: step 3/4. In terms of biological role, catalyzes the condensation of (S)-aspartate-beta-semialdehyde [(S)-ASA] and pyruvate to 4-hydroxy-tetrahydrodipicolinate (HTPA). The polypeptide is 4-hydroxy-tetrahydrodipicolinate synthase (Syntrophotalea carbinolica (strain DSM 2380 / NBRC 103641 / GraBd1) (Pelobacter carbinolicus)).